Here is a 383-residue protein sequence, read N- to C-terminus: tRNA-specific 2-thiouridylase MnmA (383 aa).

Residues 11 to 18 (GLSGGVDS) and M37 each bind ATP. The tract at residues 97 to 99 (NPD) is interaction with target base in tRNA. The Nucleophile role is filled by C102. C102 and C200 are joined by a disulfide. G127 contacts ATP. The segment at 150–152 (KDQ) is interaction with tRNA. C200 (cysteine persulfide intermediate) is an active-site residue. The segment at 312-313 (RY) is interaction with tRNA. Residues 361–383 (IDTAHPADRSAPPALQTQSTEVV) are disordered.

The protein belongs to the MnmA/TRMU family.

The protein resides in the cytoplasm. It catalyses the reaction S-sulfanyl-L-cysteinyl-[protein] + uridine(34) in tRNA + AH2 + ATP = 2-thiouridine(34) in tRNA + L-cysteinyl-[protein] + A + AMP + diphosphate + H(+). Functionally, catalyzes the 2-thiolation of uridine at the wobble position (U34) of tRNA, leading to the formation of s(2)U34. This Halorhodospira halophila (strain DSM 244 / SL1) (Ectothiorhodospira halophila (strain DSM 244 / SL1)) protein is tRNA-specific 2-thiouridylase MnmA.